Here is a 511-residue protein sequence, read N- to C-terminus: MIQIKRALISVSDKSDIVEFAQFLNQNGVEIISTGGTLKLLKDNGIQAIAIDDYTGFPEILEGRVKTLHPKVHGGLLGVVSNPAHKQKMEELKIPKIDLVVVNLYPFLKTVSKPGVQLEEAIENIDIGGPSMIRSAAKNYKHTLVLTDPSDYEEVRVLIASGGISEEVAAGYMRKAFSHTAMYDTAISSWFHKQAGDVFPDVLNLSFLKKQKLRYGENPHQAASFYEPLFVKSDFSPLQGKELSFNNMLDFDAAFHISSLLPENTVCIIKHLNPCGIAYADDPLEAFQLARRTDPISAFGGVIGIKGIVHGELATAITENFVEGVIAQKFTPEALELFSKKPNIRLIEIENFKEALDELDLRPIHHGLLIQERDYTTITEKDLKVVTKKQPTSDDIRGLMFAWSCVRFIKSNAIVYTEENATLGIGAGQMSRVDSVQLGANKALNVGLSVVGSYVASDAFFPFRDGIDALAKAGAKAIIQPGGSVRDAEVIQAADEHGLIMVFTGMRHFRH.

The MGS-like domain maps to 1–147 (MIQIKRALIS…KNYKHTLVLT (147 aa)).

This sequence belongs to the PurH family.

The enzyme catalyses (6R)-10-formyltetrahydrofolate + 5-amino-1-(5-phospho-beta-D-ribosyl)imidazole-4-carboxamide = 5-formamido-1-(5-phospho-D-ribosyl)imidazole-4-carboxamide + (6S)-5,6,7,8-tetrahydrofolate. It catalyses the reaction IMP + H2O = 5-formamido-1-(5-phospho-D-ribosyl)imidazole-4-carboxamide. Its pathway is purine metabolism; IMP biosynthesis via de novo pathway; 5-formamido-1-(5-phospho-D-ribosyl)imidazole-4-carboxamide from 5-amino-1-(5-phospho-D-ribosyl)imidazole-4-carboxamide (10-formyl THF route): step 1/1. It participates in purine metabolism; IMP biosynthesis via de novo pathway; IMP from 5-formamido-1-(5-phospho-D-ribosyl)imidazole-4-carboxamide: step 1/1. In Leptospira borgpetersenii serovar Hardjo-bovis (strain JB197), this protein is Bifunctional purine biosynthesis protein PurH.